The sequence spans 188 residues: Shikimate kinase (188 aa).

21–26 serves as a coordination point for ATP; it reads GAGKTT. Thr25 provides a ligand contact to Mg(2+). Substrate-binding residues include Asp43, Arg67, and Gly90. Arg130 contacts ATP. Position 148 (Arg148) interacts with substrate.

It belongs to the shikimate kinase family. As to quaternary structure, monomer. Mg(2+) serves as cofactor.

Its subcellular location is the cytoplasm. It carries out the reaction shikimate + ATP = 3-phosphoshikimate + ADP + H(+). It participates in metabolic intermediate biosynthesis; chorismate biosynthesis; chorismate from D-erythrose 4-phosphate and phosphoenolpyruvate: step 5/7. In terms of biological role, catalyzes the specific phosphorylation of the 3-hydroxyl group of shikimic acid using ATP as a cosubstrate. The sequence is that of Shikimate kinase from Geobacillus thermodenitrificans (strain NG80-2).